A 527-amino-acid chain; its full sequence is GMP synthase [glutamine-hydrolyzing] (527 aa).

Residues 19-212 enclose the Glutamine amidotransferase type-1 domain; it reads KIIVLDYGSQ…AFSICGAKGD (194 aa). Cys96 acts as the Nucleophile in catalysis. Residues His186 and Glu188 contribute to the active site. The 190-residue stretch at 213 to 402 folds into the GMPS ATP-PPase domain; sequence WSMANFVDMQ…LGMPDEVVWR (190 aa). Position 240 to 246 (240 to 246) interacts with ATP; sequence SGGVDSS.

In terms of assembly, homodimer.

It carries out the reaction XMP + L-glutamine + ATP + H2O = GMP + L-glutamate + AMP + diphosphate + 2 H(+). It functions in the pathway purine metabolism; GMP biosynthesis; GMP from XMP (L-Gln route): step 1/1. Catalyzes the synthesis of GMP from XMP. The sequence is that of GMP synthase [glutamine-hydrolyzing] from Streptococcus thermophilus (strain ATCC BAA-250 / LMG 18311).